We begin with the raw amino-acid sequence, 308 residues long: tRNA dimethylallyltransferase (308 aa).

Residue 14–21 (GPTASGKS) coordinates ATP. Residue 16–21 (TASGKS) participates in substrate binding. An interaction with substrate tRNA region spans residues 39-42 (DSMQ).

It belongs to the IPP transferase family. In terms of assembly, monomer. Mg(2+) serves as cofactor.

It carries out the reaction adenosine(37) in tRNA + dimethylallyl diphosphate = N(6)-dimethylallyladenosine(37) in tRNA + diphosphate. In terms of biological role, catalyzes the transfer of a dimethylallyl group onto the adenine at position 37 in tRNAs that read codons beginning with uridine, leading to the formation of N6-(dimethylallyl)adenosine (i(6)A). This is tRNA dimethylallyltransferase from Bradyrhizobium sp. (strain ORS 278).